Here is a 1373-residue protein sequence, read N- to C-terminus: MVSLRDNIEAQPLSHNRRIRKNFGHINLVADIPNLIEIQKNSYEKNFLQLNIKDSERKNKGLQSILNSIFPISDSSNIANLEFVKYEFDTTKYDVEECSQRSLSYAAPLKVTLRLSIWDIDEDTGTREIKGIKEQEVYMGDIPLMTKNGTFIINGTERVVVSQMHRSPGVFFYHDEGKVHSSGKLLYSARVIPYRGSWLDLEFDAKDVIYFRIDRKRKLYTTTLLRAIGMSTEEIIKFYYNSVTYKLVKNKGWAVKFIPQHITAHRLTSDLVDADTGNILLKAGQKITPRLAKKYFGEGLNNILVAHETLIGKYLSEDLRDPASDEVLAKIGEMITADMLNVINDLKIKNVNVLVINPQSGPYIRNTLFADKNQDREAALCDIFRVLRPGEPVNIEAAESLFYNLFFDTERYDLSEVGRIKMNSRLELNISEEVTVLTIDDIKNIVRVLVELKDGKGIIDDIDHLGNRRVRSVGELIENQFRIGLVRMEKSVIERMSAGDVDTVMPHDLVNSKILVAVVKEFFSTSQLSQFMDQTNPLSEITHKRRLSALGPGGLSRDRAGFEVRDVHPTHYGRICPIETPEGQNIGLINSMATYARINKHGFIESPYRRVKDGCVTDEVVYLSAIEEGKYKIGQANSKINKDGKLQGEFINCRVEGGNFVMVEPYEVDFIDVTPMQVVSVAASLIPFLENDDANRALMGSNMQRQAVPLIKTDAPFVGTGVEGVVAKDSGASVLALHDGIVEQVDSNRIVIRILEQKVDGSPSVDIYNLLKFQKSNHNTCINQKPLVKVGHYVKKNDIIADGPSTDNGEIALGRNVLVAFLPWNGYNFEDSILISERIVKEDVFTSIHIEEFEVIARDTRLGPEEITRDIPNVSEEALRHLDEVGIIYIGAEVQAGDILVGKVTPKSESPITPEEKLLRAIFGEKAFDVKDSSLHVPSGVNGTVVEVRVFSRRGVEKDQRAIAIEKQQIEKFAKDRDDELEIIEHFVFSWLEKLLVGQVIINGPKQATVGQTITTEMLKGLSKGQFWQITVEDANVMNEIEQIKTHYDEKKEALDKRFATKVEKLQSGDDLPQGALKVVKVFIATKHKLQPGDKMAGRHGNKGVISRIVPEEDMPFLEDGTVVDIVLNPLGLPSRMNIGQILETHLGWASINLAKKISTLVKEYKNKHIGIEQIKKFLIELYGENINSILERPEEEIIAFCKKVSKGVHFATPVFDGAKVQDVKDMLKLAGQDPSGQVKLIDGRTGEYFDRLVTVGQKYLLKLHHLVDNKIHSRSIGPYSLVTQQPLGGKSHFGGQRFGEMECWALQAYGAAYTLQEMLTVKSDDVNGRIKTYDSIVRGENNFESGIPESFNVMIKEFRSLCLNVKLEVTSS.

It belongs to the RNA polymerase beta chain family. As to quaternary structure, the RNAP catalytic core consists of 2 alpha, 1 beta, 1 beta' and 1 omega subunit. When a sigma factor is associated with the core the holoenzyme is formed, which can initiate transcription.

It carries out the reaction RNA(n) + a ribonucleoside 5'-triphosphate = RNA(n+1) + diphosphate. DNA-dependent RNA polymerase catalyzes the transcription of DNA into RNA using the four ribonucleoside triphosphates as substrates. This Rickettsia peacockii (strain Rustic) protein is DNA-directed RNA polymerase subunit beta.